The primary structure comprises 820 residues: Phenylalanine--tRNA ligase beta subunit (820 aa).

Residues 39 to 150 (PAPVGGVLLV…GTAAPGTPLR (112 aa)) enclose the tRNA-binding domain. One can recognise a B5 domain in the interval 435-510 (EVPQTITTTG…RLHGFTELPE (76 aa)). Residues Asp488, Asp494, Glu497, and Glu498 each contribute to the Mg(2+) site. The FDX-ACB domain occupies 727-818 (SRAPAAWRDL…AVKARGWAIR (92 aa)).

This sequence belongs to the phenylalanyl-tRNA synthetase beta subunit family. Type 1 subfamily. Tetramer of two alpha and two beta subunits. Mg(2+) is required as a cofactor.

The protein localises to the cytoplasm. It catalyses the reaction tRNA(Phe) + L-phenylalanine + ATP = L-phenylalanyl-tRNA(Phe) + AMP + diphosphate + H(+). The sequence is that of Phenylalanine--tRNA ligase beta subunit (pheT) from Deinococcus radiodurans (strain ATCC 13939 / DSM 20539 / JCM 16871 / CCUG 27074 / LMG 4051 / NBRC 15346 / NCIMB 9279 / VKM B-1422 / R1).